The primary structure comprises 511 residues: Bifunctional purine biosynthesis protein PurH (511 aa).

An MGS-like domain is found at 1–145 (MKKRALVSVS…KNHKFVSVIV (145 aa)).

It belongs to the PurH family.

The enzyme catalyses (6R)-10-formyltetrahydrofolate + 5-amino-1-(5-phospho-beta-D-ribosyl)imidazole-4-carboxamide = 5-formamido-1-(5-phospho-D-ribosyl)imidazole-4-carboxamide + (6S)-5,6,7,8-tetrahydrofolate. The catalysed reaction is IMP + H2O = 5-formamido-1-(5-phospho-D-ribosyl)imidazole-4-carboxamide. It participates in purine metabolism; IMP biosynthesis via de novo pathway; 5-formamido-1-(5-phospho-D-ribosyl)imidazole-4-carboxamide from 5-amino-1-(5-phospho-D-ribosyl)imidazole-4-carboxamide (10-formyl THF route): step 1/1. The protein operates within purine metabolism; IMP biosynthesis via de novo pathway; IMP from 5-formamido-1-(5-phospho-D-ribosyl)imidazole-4-carboxamide: step 1/1. The polypeptide is Bifunctional purine biosynthesis protein PurH (Bacillus mycoides (strain KBAB4) (Bacillus weihenstephanensis)).